We begin with the raw amino-acid sequence, 172 residues long: Putative F-box protein At3g13825 (172 aa).

An F-box domain is found at 1 to 51 (MTTLSNLSVDLVGEIFSRVPLISLSEVRCTCTTWNTLSWNILSENYVFGKA).

In Arabidopsis thaliana (Mouse-ear cress), this protein is Putative F-box protein At3g13825.